Reading from the N-terminus, the 277-residue chain is Ribosomal RNA small subunit methyltransferase A (277 aa).

S-adenosyl-L-methionine is bound by residues N20, L22, G47, E68, D93, and N114.

Belongs to the class I-like SAM-binding methyltransferase superfamily. rRNA adenine N(6)-methyltransferase family. RsmA subfamily.

It is found in the cytoplasm. It catalyses the reaction adenosine(1518)/adenosine(1519) in 16S rRNA + 4 S-adenosyl-L-methionine = N(6)-dimethyladenosine(1518)/N(6)-dimethyladenosine(1519) in 16S rRNA + 4 S-adenosyl-L-homocysteine + 4 H(+). Functionally, specifically dimethylates two adjacent adenosines (A1518 and A1519) in the loop of a conserved hairpin near the 3'-end of 16S rRNA in the 30S particle. May play a critical role in biogenesis of 30S subunits. This Aliivibrio salmonicida (strain LFI1238) (Vibrio salmonicida (strain LFI1238)) protein is Ribosomal RNA small subunit methyltransferase A.